A 963-amino-acid polypeptide reads, in one-letter code: Ubiquitin carboxyl-terminal hydrolase 4 (963 aa).

A DUSP domain is found at 11-122; it reads PDAETQKSEL…GQQPIVRKVV (112 aa). Positions 27–216 are necessary for interaction with SART3; sequence TLQRGAQWYL…LYQGQVLVIE (190 aa). The short motif at 133–141 is the Nuclear export signal element; sequence VEVYLLELK. In terms of domain architecture, Ubiquitin-like 1 spans 142 to 226; it reads LCENSDPTNV…PQNEDGTWPR (85 aa). The tract at residues 219–277 is disordered; that stretch reads NEDGTWPRQTQQSKSSTAPSRNFTTSPKSSASPYSSVSASPIANGDSTNTSGMHSSGVS. Over residues 225–243 the composition is skewed to polar residues; the sequence is PRQTQQSKSSTAPSRNFTT. Residues 229–295 are required for USP4 activation by providing conformational flexibility between the DUSP and catalytic domains; it reads QQSKSSTAPS…SYNCQESPLT (67 aa). Over residues 244–261 the composition is skewed to low complexity; the sequence is SPKSSASPYSSVSASPIA. The region spanning 302–923 is the USP domain; it reads CGLGNLGNTC…AAYVLFYQRR (622 aa). The Nucleophile role is filled by Cys-311. A regulates ubiquitin dissociation region spans residues 384–386; that stretch reads PQF. Residues 405 to 407 form a necessary for interaction with RBL2 region; that stretch reads LHE. Ser-445 carries the post-translational modification Phosphoserine. Residues 459 to 463 are necessary for interaction with RB1 and RBL2; that stretch reads LVCPE. Residues Cys-461 and Cys-464 each contribute to the Zn(2+) site. Residues 483 to 571 form the Ubiquitin-like 2 domain; the sequence is LKKDRVMEIF…IFVYEVCSTS (89 aa). The interval 485-775 is interacts with DUSP and ubiquitin-like 1 domains and is required for USP4 activation; sequence KDRVMEIFLV…LQPQKKKKTA (291 aa). Residues 634-701 form a disordered region; it reads PLPDESGSSP…ATQKKNKGRP (68 aa). Phosphoserine is present on residues Ser-675 and Ser-680. The short motif at 767–772 is the Nuclear localization signal element; it reads QPQKKK. 2 residues coordinate Zn(2+): Cys-799 and Cys-802. His-881 serves as the catalytic Proton acceptor. The segment at 930–963 is disordered; sequence TPSLSFPGSSDGGARPSSSQQGTGDDETYSMDTN. Residues 953 to 963 are compositionally biased toward acidic residues; the sequence is GDDETYSMDTN.

It belongs to the peptidase C19 family. USP4 subfamily. In terms of assembly, interacts with RB1 (both dephosphorylated and hypophosphorylated forms). Interacts with RBL1 and RBL2. Interacts with ADORA2A (via cytoplasmic C-terminus); the interaction is direct. Interacts with SART3; recruits USP4 to its substrate PRPF3. Phosphorylated at Ser-445 by PKB/AKT1 in response to EGF stimulus, promoting its ability deubiquitinate RHEB. In terms of processing, monoubiquitinated by TRIM21. Ubiquitination does not lead to its proteasomal degradation. Autodeubiquitinated.

It is found in the cytoplasm. The protein localises to the nucleus. The catalysed reaction is Thiol-dependent hydrolysis of ester, thioester, amide, peptide and isopeptide bonds formed by the C-terminal Gly of ubiquitin (a 76-residue protein attached to proteins as an intracellular targeting signal).. With respect to regulation, the completion of the deubiquitinase reaction is mediated by the DUSP and ubiquitin-like 1 domains which promotes the release of ubiquitin from the catalytic site enabling subsequent reactions to occur. Functionally, deubiquitinating enzyme that removes conjugated ubiquitin from target proteins. Deubiquitinates PDPK1. Deubiquitinates TRIM21. Deubiquitinates receptor ADORA2A which increases the amount of functional receptor at the cell surface. Deubiquitinates HAS2. Deubiquitinates RHEB in response to EGF signaling, promoting mTORC1 signaling. May regulate mRNA splicing through deubiquitination of the U4 spliceosomal protein PRPF3. This may prevent its recognition by the U5 component PRPF8 thereby destabilizing interactions within the U4/U6.U5 snRNP. May also play a role in the regulation of quality control in the ER. The sequence is that of Ubiquitin carboxyl-terminal hydrolase 4 (USP4) from Bos taurus (Bovine).